The chain runs to 274 residues: NH(3)-dependent NAD(+) synthetase (274 aa).

Residue 46 to 53 (GISGGQDS) coordinates ATP. Residue D52 participates in Mg(2+) binding. R140 is a deamido-NAD(+) binding site. An ATP-binding site is contributed by T160. Residue E165 coordinates Mg(2+). Residues K173 and D180 each coordinate deamido-NAD(+). ATP-binding residues include K189 and T211. 260–261 (HK) is a deamido-NAD(+) binding site.

The protein belongs to the NAD synthetase family. Homodimer.

It catalyses the reaction deamido-NAD(+) + NH4(+) + ATP = AMP + diphosphate + NAD(+) + H(+). It functions in the pathway cofactor biosynthesis; NAD(+) biosynthesis; NAD(+) from deamido-NAD(+) (ammonia route): step 1/1. Functionally, catalyzes the ATP-dependent amidation of deamido-NAD to form NAD. Uses ammonia as a nitrogen source. In Lactococcus lactis subsp. cremoris (strain SK11), this protein is NH(3)-dependent NAD(+) synthetase.